The primary structure comprises 474 residues: Glutamine synthetase (474 aa).

A GS beta-grasp domain is found at 14 to 99 (EKIELIDLKF…VCSIKEPRTG (86 aa)). The region spanning 106–474 (PRVIAQKAID…PYEFSIYYDV (369 aa)) is the GS catalytic domain. Positions 131 and 133 each coordinate Mg(2+). ATP is bound at residue Glu-211. Glu-216 and Glu-224 together coordinate Mg(2+). L-glutamate is bound by residues 268–269 (NG) and Gly-269. A Mg(2+)-binding site is contributed by His-273. ATP-binding positions include 275–277 (HQS) and Ser-277. Residues Arg-325, Glu-331, and Arg-343 each coordinate L-glutamate. ATP is bound by residues Arg-343, Arg-348, and Lys-357. Residue Glu-362 participates in Mg(2+) binding. Arg-364 contributes to the L-glutamate binding site. The residue at position 402 (Tyr-402) is an O-AMP-tyrosine.

The protein belongs to the glutamine synthetase family. As to quaternary structure, oligomer of 12 subunits arranged in the form of two hexagons. Mg(2+) serves as cofactor.

It is found in the cytoplasm. It catalyses the reaction L-glutamate + NH4(+) + ATP = L-glutamine + ADP + phosphate + H(+). Its activity is regulated as follows. The activity of this enzyme could be controlled by adenylation under conditions of abundant glutamine. Functionally, involved in nitrogen metabolism via ammonium assimilation. Catalyzes the ATP-dependent biosynthesis of glutamine from glutamate and ammonia. This chain is Glutamine synthetase, found in Nostoc sp. (strain PCC 7120 / SAG 25.82 / UTEX 2576).